A 187-amino-acid polypeptide reads, in one-letter code: NAC domain-containing protein 104 (187 aa).

One can recognise an NAC domain in the interval 3–155 (LPPGFRFFPT…KWVICRVYEQ (153 aa)). Residues 94–161 (VGIKKYLTFY…VYEQNCSEEE (68 aa)) mediate DNA binding. Residues 118–142 (LPDSSSSSSRSSKRSSRASSSSHKP) form a disordered region.

As to expression, expressed in root xylem vessels. Expressed in stems, vascular tissue of cauline leaves and tracheary elements of sepals.

It localises to the nucleus. In terms of biological role, probable transcription factor that influences tracheary elements and xylem development by negatively regulating secondary cell wall fiber synthesis and programmed cell death. In Arabidopsis thaliana (Mouse-ear cress), this protein is NAC domain-containing protein 104.